The primary structure comprises 291 residues: N-acetylmannosamine kinase (291 aa).

Residues 5-12 (AIDIGGTK) and 132-139 (GVGGGVVC) contribute to the ATP site. The Zn(2+) site is built by H156, C166, C168, and C173.

Belongs to the ROK (NagC/XylR) family. NanK subfamily. In terms of assembly, homodimer.

The catalysed reaction is an N-acyl-D-mannosamine + ATP = an N-acyl-D-mannosamine 6-phosphate + ADP + H(+). It participates in amino-sugar metabolism; N-acetylneuraminate degradation; D-fructose 6-phosphate from N-acetylneuraminate: step 2/5. Catalyzes the phosphorylation of N-acetylmannosamine (ManNAc) to ManNAc-6-P. This Salmonella dublin (strain CT_02021853) protein is N-acetylmannosamine kinase.